Reading from the N-terminus, the 489-residue chain is Betaine aldehyde dehydrogenase (489 aa).

Positions 26 and 93 each coordinate K(+). Position 150–152 (150–152) interacts with NAD(+); it reads GAW. Lysine 162 serves as the catalytic Charge relay system. Residue 176–179 coordinates NAD(+); the sequence is KPSE. A K(+)-binding site is contributed by valine 180. 229–232 is an NAD(+) binding site; sequence GVET. Residue leucine 245 coordinates K(+). Glutamate 251 serves as the catalytic Proton acceptor. Glycine 253, cysteine 285, and glutamate 386 together coordinate NAD(+). Cysteine 285 acts as the Nucleophile in catalysis. Cysteine sulfenic acid (-SOH) is present on cysteine 285. Lysine 456 and glycine 459 together coordinate K(+). The active-site Charge relay system is the glutamate 463.

Belongs to the aldehyde dehydrogenase family. Dimer of dimers. Requires K(+) as cofactor.

The enzyme catalyses betaine aldehyde + NAD(+) + H2O = glycine betaine + NADH + 2 H(+). Its pathway is amine and polyamine biosynthesis; betaine biosynthesis via choline pathway; betaine from betaine aldehyde: step 1/1. Functionally, involved in the biosynthesis of the osmoprotectant glycine betaine. Catalyzes the irreversible oxidation of betaine aldehyde to the corresponding acid. The polypeptide is Betaine aldehyde dehydrogenase (Burkholderia multivorans (strain ATCC 17616 / 249)).